A 146-amino-acid polypeptide reads, in one-letter code: Probable actin-related protein 2/3 complex subunit 5 (146 aa).

Belongs to the ARPC5 family. In terms of assembly, component of the Arp2/3 complex composed of ARP2, ARP3, ARPC1B/p41-ARC, ARPC2/p34-ARC, ARPC3/p21-ARC, ARPC4/p20-ARC and ARPC5/p16-ARC.

It is found in the cytoplasm. Its subcellular location is the cytoskeleton. In terms of biological role, functions as a component of the Arp2/3 complex which is involved in regulation of actin polymerization and together with an activating nucleation-promoting factor (NPF) mediates the formation of branched actin networks. This is Probable actin-related protein 2/3 complex subunit 5 from Caenorhabditis elegans.